Reading from the N-terminus, the 454-residue chain is tRNA modification GTPase MnmE (454 aa).

Positions 23, 80, and 120 each coordinate (6S)-5-formyl-5,6,7,8-tetrahydrofolate. In terms of domain architecture, TrmE-type G spans 216 to 377 (GMKVVIAGRP…LRNHLKQSMG (162 aa)). K(+) is bound at residue N226. GTP-binding positions include 226-231 (NAGKSS), 245-251 (TDIAGTT), 270-273 (DTAG), 335-338 (NKAD), and 358-360 (SAR). S230 is a Mg(2+) binding site. The K(+) site is built by T245, I247, and T250. T251 provides a ligand contact to Mg(2+). K454 serves as a coordination point for (6S)-5-formyl-5,6,7,8-tetrahydrofolate.

Belongs to the TRAFAC class TrmE-Era-EngA-EngB-Septin-like GTPase superfamily. TrmE GTPase family. As to quaternary structure, homodimer. Heterotetramer of two MnmE and two MnmG subunits. The cofactor is K(+).

Its subcellular location is the cytoplasm. In terms of biological role, exhibits a very high intrinsic GTPase hydrolysis rate. Involved in the addition of a carboxymethylaminomethyl (cmnm) group at the wobble position (U34) of certain tRNAs, forming tRNA-cmnm(5)s(2)U34. This is tRNA modification GTPase MnmE from Citrobacter koseri (strain ATCC BAA-895 / CDC 4225-83 / SGSC4696).